We begin with the raw amino-acid sequence, 197 residues long: Protein GrpE (197 aa).

Positions 1–43 are disordered; it reads MSSKEQKTPDGQAPEEIVTEQHEEVESVESAESAEQVDPRDEE.

This sequence belongs to the GrpE family. In terms of assembly, homodimer.

It is found in the cytoplasm. Its function is as follows. Participates actively in the response to hyperosmotic and heat shock by preventing the aggregation of stress-denatured proteins, in association with DnaK and GrpE. It is the nucleotide exchange factor for DnaK and may function as a thermosensor. Unfolded proteins bind initially to DnaJ; upon interaction with the DnaJ-bound protein, DnaK hydrolyzes its bound ATP, resulting in the formation of a stable complex. GrpE releases ADP from DnaK; ATP binding to DnaK triggers the release of the substrate protein, thus completing the reaction cycle. Several rounds of ATP-dependent interactions between DnaJ, DnaK and GrpE are required for fully efficient folding. This is Protein GrpE from Cronobacter sakazakii (strain ATCC BAA-894) (Enterobacter sakazakii).